Here is a 206-residue protein sequence, read N- to C-terminus: Large ribosomal subunit protein uL4 (206 aa).

Residues 45–75 are disordered; that stretch reads RQGTHSTKTRGEVRGGGRKPWRQKGTGRARQ. Residues 60-71 are compositionally biased toward basic residues; sequence GGRKPWRQKGTG.

This sequence belongs to the universal ribosomal protein uL4 family. As to quaternary structure, part of the 50S ribosomal subunit.

Functionally, one of the primary rRNA binding proteins, this protein initially binds near the 5'-end of the 23S rRNA. It is important during the early stages of 50S assembly. It makes multiple contacts with different domains of the 23S rRNA in the assembled 50S subunit and ribosome. Its function is as follows. Forms part of the polypeptide exit tunnel. The polypeptide is Large ribosomal subunit protein uL4 (Thermoanaerobacter pseudethanolicus (strain ATCC 33223 / 39E) (Clostridium thermohydrosulfuricum)).